The primary structure comprises 416 residues: Adenylosuccinate synthetase (416 aa).

GTP-binding positions include 12–18 and 40–42; these read GDEGKGK and GHT. Residue D13 is the Proton acceptor of the active site. 2 residues coordinate Mg(2+): D13 and G40. IMP is bound by residues 13–16, 38–41, T125, R139, Q220, T235, and R299; these read DEGK and NAGH. H41 (proton donor) is an active-site residue. 295–301 contacts substrate; the sequence is TTTGRPR. Residues R301, 327-329, and 405-407 contribute to the GTP site; these read KLD and STS.

It belongs to the adenylosuccinate synthetase family. In terms of assembly, homodimer. Mg(2+) serves as cofactor.

Its subcellular location is the cytoplasm. The catalysed reaction is IMP + L-aspartate + GTP = N(6)-(1,2-dicarboxyethyl)-AMP + GDP + phosphate + 2 H(+). It participates in purine metabolism; AMP biosynthesis via de novo pathway; AMP from IMP: step 1/2. In terms of biological role, plays an important role in the de novo pathway of purine nucleotide biosynthesis. Catalyzes the first committed step in the biosynthesis of AMP from IMP. This chain is Adenylosuccinate synthetase, found in Nitratiruptor sp. (strain SB155-2).